The chain runs to 633 residues: Laccase ARB_05828 (633 aa).

A signal peptide spans 1-16 (MKRLGLAALYIGSALA). The propeptide occupies 22 to 47 (GPPSRNVPRDDFPMFNPLPSTDLNTR). The N-linked (GlcNAc...) asparagine glycan is linked to asparagine 143. Residues histidine 148, histidine 150, histidine 192, and histidine 194 each contribute to the Cu cation site. Cysteine 169 and cysteine 607 are oxidised to a cystine. The Plastocyanin-like domain maps to 224–353 (LLMTDHLHSS…GRYWVRTTPA (130 aa)). Asparagine 286 and asparagine 456 each carry an N-linked (GlcNAc...) asparagine glycan. Cu cation is bound by residues histidine 508, histidine 511, histidine 513, histidine 568, cysteine 569, histidine 570, and histidine 574.

Belongs to the multicopper oxidase family. In terms of assembly, monomer. Cu cation is required as a cofactor.

It localises to the secreted. It catalyses the reaction 4 hydroquinone + O2 = 4 benzosemiquinone + 2 H2O. This is Laccase ARB_05828 from Arthroderma benhamiae (strain ATCC MYA-4681 / CBS 112371) (Trichophyton mentagrophytes).